Reading from the N-terminus, the 447-residue chain is Chordin-like protein 1 (447 aa).

The signal sequence occupies residues 1–22 (MEGIKYIASLVFFFVFLEASKT). 2 consecutive VWFC domains span residues 30–95 (TYCM…PRCP) and 108–174 (KSCE…RVCR). The N-linked (GlcNAc...) asparagine glycan is linked to asparagine 113. The Cell attachment site motif lies at 174–176 (RGD). A disordered region spans residues 199 to 219 (HSYLRSPYDPPPSRQAGGLPR). Residues 253 to 318 (QVCVSNGKTY…LDGKCCKVCP (66 aa)) form the VWFC 3 domain. N-linked (GlcNAc...) asparagine glycosylation occurs at asparagine 286.

It is found in the secreted. Its function is as follows. Seems to antagonize the function of BMP4 by binding to it and preventing its interaction with receptors. Alters the fate commitment of neural stem cells from gliogenesis to neurogenesis. Contributes to neuronal differentiation of neural stem cells in the brain by preventing the adoption of a glial fate. May play a crucial role in dorsoventral axis formation. May play a role in embryonic bone formation. Plays a role during anterior segment eye development. This chain is Chordin-like protein 1 (Chrdl1), found in Rattus norvegicus (Rat).